Consider the following 464-residue polypeptide: Mannose-1-phosphate guanylyltransferase (464 aa).

Belongs to the mannose-6-phosphate isomerase type 2 family.

It catalyses the reaction alpha-D-mannose 1-phosphate + GTP + H(+) = GDP-alpha-D-mannose + diphosphate. The protein operates within nucleotide-sugar biosynthesis; GDP-alpha-D-mannose biosynthesis; GDP-alpha-D-mannose from alpha-D-mannose 1-phosphate (GTP route): step 1/1. It functions in the pathway bacterial outer membrane biogenesis; LPS O-antigen biosynthesis. Its function is as follows. Involved in GDP-mannose biosynthesis which serves as the activated sugar nucleotide precursor for mannose residues in cell surface polysaccharides. This enzyme participates in synthesis of the LPS O7 antigen. The chain is Mannose-1-phosphate guanylyltransferase (manC) from Escherichia coli.